The primary structure comprises 161 residues: Ribonuclease H (161 aa).

An RNase H type-1 domain is found at 2–141 (TNNEIIAATD…ADSLARQAAN (140 aa)). The Mg(2+) site is built by D11, E46, D69, and D133.

It belongs to the RNase H family. As to quaternary structure, monomer. Mg(2+) is required as a cofactor.

Its subcellular location is the cytoplasm. It catalyses the reaction Endonucleolytic cleavage to 5'-phosphomonoester.. In terms of biological role, endonuclease that specifically degrades the RNA of RNA-DNA hybrids. The sequence is that of Ribonuclease H from Tropheryma whipplei (strain TW08/27) (Whipple's bacillus).